An 81-amino-acid chain; its full sequence is ATP synthase subunit c, chloroplastic (81 aa).

The next 2 membrane-spanning stretches (helical) occupy residues 3–23 (PIIS…ASIG) and 57–77 (LAFM…LLFA).

It belongs to the ATPase C chain family. As to quaternary structure, F-type ATPases have 2 components, F(1) - the catalytic core - and F(0) - the membrane proton channel. F(1) has five subunits: alpha(3), beta(3), gamma(1), delta(1), epsilon(1). F(0) has four main subunits: a(1), b(1), b'(1) and c(10-14). The alpha and beta chains form an alternating ring which encloses part of the gamma chain. F(1) is attached to F(0) by a central stalk formed by the gamma and epsilon chains, while a peripheral stalk is formed by the delta, b and b' chains.

It localises to the plastid. The protein resides in the chloroplast thylakoid membrane. In terms of biological role, f(1)F(0) ATP synthase produces ATP from ADP in the presence of a proton or sodium gradient. F-type ATPases consist of two structural domains, F(1) containing the extramembraneous catalytic core and F(0) containing the membrane proton channel, linked together by a central stalk and a peripheral stalk. During catalysis, ATP synthesis in the catalytic domain of F(1) is coupled via a rotary mechanism of the central stalk subunits to proton translocation. Functionally, key component of the F(0) channel; it plays a direct role in translocation across the membrane. A homomeric c-ring of between 10-14 subunits forms the central stalk rotor element with the F(1) delta and epsilon subunits. The chain is ATP synthase subunit c, chloroplastic from Phaseolus vulgaris (Kidney bean).